Reading from the N-terminus, the 224-residue chain is Inhibitor of apoptosis protein (224 aa).

One copy of the BIR repeat lies at 29–92; that stretch reads IDARNQSFAI…GFWSRNCGFM (64 aa). 4 residues coordinate Zn(2+): Cys62, Cys65, His82, and Cys89.

It belongs to the asfivirus IAP family. As to quaternary structure, interacts with subunit p17 of host CASP3.

It is found in the host cytoplasm. The protein localises to the virion. In terms of biological role, prevent apoptosis of host cell by inhibiting caspase-3/CASP3 activation to promote the viral replication. Also induces the activation of host NF-kappaB. In African swine fever virus (isolate Pig/Haiti/H811/1981) (ASFV), this protein is Inhibitor of apoptosis protein (p27).